A 302-amino-acid polypeptide reads, in one-letter code: MREKRTISNKDTNYLKFPNKLQRYSRFLSRKISNTSPEKQPKKNIKEHCLSSYHKEHSVKPKQNSGNVAAKEDKDTQHLQNNVANEEATECLTRSNLKKLQEKIFDRELNDIACDHCLCSTENRRDIKYSRLWFLFELEMSENWNENLRLSCYNKYVYSAIDESWKMENILLKEQEKHYEYFPIGQLLIPNNIDYTNKQKRKENIEDLTIEIDSIIETNHQKKRFLPQSVLIKREDEIAFDDFHLDARKVLNDLSATSENPFSSSPNTKKIKSKGKTLEVVPKKKNKKIIGALERKLHIDEN.

Disordered stretches follow at residues Y53–V83 and T257–K276. Residues T257–T268 are compositionally biased toward polar residues.

Component of the monopolin complex composed of at least CSM1, LRS4 and MAM1. The complex associates with the kinetochore during late pachytene. In terms of processing, phosphorylated by CDC5. This phosphorylation is required for the location to the kinetochores during late pachytene.

It localises to the nucleus. Its function is as follows. Component of the monopolin complex which promotes monoorientation during meiosis I, required for chromosome segregation during meiosis. The protein is Monopolin complex subunit MAM1 (MAM1) of Saccharomyces cerevisiae (strain ATCC 204508 / S288c) (Baker's yeast).